The primary structure comprises 1162 residues: Reticulon-4 (1162 aa).

N-acetylmethionine is present on Met1. The segment at 1-183 is disordered; the sequence is MEDIDQSSLV…ALPAASEPVI (183 aa). Over 1–988 the chain is Cytoplasmic; the sequence is MEDIDQSSLV…LYWRDIKKTG (988 aa). A phosphoserine mark is found at Ser7 and Ser16. Over residues 7-16 the composition is skewed to low complexity; sequence SSLVSSSADS. A compositionally biased stretch (acidic residues) spans 31-54; sequence EPEDEEDEEDEEEEEDDEDLEELE. Over residues 85-99 the composition is skewed to pro residues; the sequence is PPAPRGPLPAAPPTA. Phosphoserine is present on Ser105. Residues 109-127 are compositionally biased toward low complexity; sequence SPAASAPSLPPAAAVLPSK. A phosphoserine mark is found at Ser145, Ser165, Ser167, Ser329, and Ser344. Thr348 carries the phosphothreonine modification. Residues 408 to 422 show a composition bias toward basic and acidic residues; sequence SLEQKGHGKDSESRN. Residues 408–432 are disordered; the sequence is SLEQKGHGKDSESRNENASFPRTPE. Position 426 is a phosphoserine (Ser426). Thr430 is modified (phosphothreonine). Phosphoserine occurs at positions 489, 690, 727, 768, and 832. The interval 711-730 is disordered; that stretch reads ELVDDSSPESEPVDLFSDDS. Positions 713–730 are enriched in acidic residues; the sequence is VDDSSPESEPVDLFSDDS. A Phosphothreonine modification is found at Thr834. Phosphoserine is present on residues Ser857 and Ser961. The Reticulon domain occupies 975–1162; the sequence is VVDLLYWRDI…KIPGLKRKAE (188 aa). Residues 989 to 1009 traverse the membrane as a helical segment; sequence VVFGASLFLLLSLTVFSIVSV. The Lumenal segment spans residues 1010 to 1078; it reads TAYIALALLS…VNSTIKELRR (69 aa). Lys1074 is subject to N6-acetyllysine. The chain crosses the membrane as a helical span at residues 1079 to 1099; it reads LFLVDDLVDSLKFAVLMWVFT. The Cytoplasmic portion of the chain corresponds to 1100-1162; that stretch reads YVGALFNGLT…KIPGLKRKAE (63 aa).

Binds to RTN4R. Interacts with ATL1. Interacts with TMEM170A. Interacts with RTN4IP1. In terms of assembly, interacts in trans with CNTNAP1. Interacts with REEP5. Interacts with GPR50. Interacts with synaptic plasticity regulator PANTS; the interaction results in enhanced RTN4-mediated inhibition of AMPA receptor clustering. As to quaternary structure, homodimer. Interacts with BAD/Bcl-xl and BCL2. Interact with RTN3. Interacts with NGBR. Interacts with SPTLC1. Interacts with GRAMD4. Interacts with CDH5. Interacts with BACE1 and BACE2. Interacts with REEP5. Interacts with RETREG3. Interacts with BACE1 and BACE2. Interacts with TMEM33. As to expression, expressed in cardiomyocytes (at protein level). Highly expressed in brain but not deteceted in aorta, femoral and carotid arteries. Main isoform expressed in neurons. Expressed in cardiomyocytes (at protein level). Expressed in splenocytes, T-cells, B-cells, bone marrow derived dendritic cells and macrophages (at protein level). Expressed in neurons. Highly expressed in endothelial cells and vascular smooth muscle cells, including blood vessels and mesenteric arteries. Expressed in bronchial and alveolar epithelial cells as well as vascular endothelial cells of lungs. In terms of tissue distribution, expressed in B-cells, bone marrow dendritic cells and macrophages (at protein level). As to expression, expressed in cardiomyocytes. Expressed at very low levels in neurons.

The protein resides in the endoplasmic reticulum membrane. Its subcellular location is the cell membrane. It localises to the synapse. The protein localises to the cell junction. Required to induce the formation and stabilization of endoplasmic reticulum (ER) tubules. They regulate membrane morphogenesis in the ER by promoting tubular ER production. They influence nuclear envelope expansion, nuclear pore complex formation and proper localization of inner nuclear membrane proteins. However each isoform have specific functions mainly depending on their tissue expression specificities. Functionally, developmental neurite growth regulatory factor with a role as a negative regulator of axon-axon adhesion and growth, and as a facilitator of neurite branching. Regulates neurite fasciculation, branching and extension in the developing nervous system. Involved in down-regulation of growth, stabilization of wiring and restriction of plasticity in the adult CNS. Regulates the radial migration of cortical neurons via an RTN4R-LINGO1 containing receptor complex. Acts as a negative regulator of central nervous system angiogenesis. Inhibits spreading, migration and sprouting of primary brain microvascular endothelial cells (MVECs). Also induces the retraction of MVECs lamellipodia and filopodia in a ROCK pathway-dependent manner. In terms of biological role, mainly function in endothelial cells and vascular smooth muscle cells, is also involved in immune system regulation. Modulator of vascular remodeling, promotes the migration of endothelial cells but inhibits the migration of vascular smooth muscle cells. Regulates endothelial sphingolipid biosynthesis with direct effects on vascular function and blood pressure. Inhibits serine palmitoyltransferase, SPTLC1, the rate-limiting enzyme of the novo sphingolipid biosynthetic pathway, thereby controlling production of endothelial sphingosine-1-phosphate (S1P). Required to promote macrophage homing and functions such as cytokine/chemokine gene expression involved in angiogenesis, arteriogenesis and tissue repair. Mediates ICAM1 induced transendothelial migration of leukocytes such as monocytes and neutrophils and acute inflammation. Necessary for immune responses triggered by nucleic acid sensing TLRs, such as TLR9, is required for proper TLR9 location to endolysosomes. Also involved in immune response to LPS. Plays a role in liver regeneration through the modulation of hepatocytes proliferation. Reduces the anti-apoptotic activity of Bcl-xl and Bcl-2. This is likely consecutive to their change in subcellular location, from the mitochondria to the endoplasmic reticulum, after binding and sequestration. With isoform C, inhibits BACE1 activity and amyloid precursor protein processing. Its function is as follows. Regulates cardiomyocyte apoptosis upon hypoxic conditions. With isoform B, inhibits BACE1 activity and amyloid precursor protein processing. The protein is Reticulon-4 of Mus musculus (Mouse).